Reading from the N-terminus, the 885-residue chain is Cadherin-1 (885 aa).

The N-terminal stretch at methionine 1 to cysteine 26 is a signal peptide. The propeptide occupies glutamine 27–arginine 156. Residues lysine 121–histidine 131 show a composition bias toward basic residues. Positions lysine 121–valine 141 are disordered. Topologically, residues aspartate 157–alanine 712 are extracellular. Cadherin domains follow at residues tryptophan 158 to phenylalanine 264, threonine 265 to phenylalanine 377, asparagine 378 to phenylalanine 488, isoleucine 489 to proline 597, and lysine 607 to cysteine 688. Residue aspartate 259 coordinates Ca(2+). Serine 282 carries an O-linked (Man...) serine glycan. Residue threonine 287 is glycosylated (O-linked (Man...) threonine). Aspartate 290 lines the Ca(2+) pocket. O-linked (Man...) threonine glycans are attached at residues threonine 360, threonine 472, threonine 474, and threonine 511. The N-linked (GlcNAc...) asparagine glycan is linked to asparagine 560. O-linked (Man...) threonine glycosylation is found at threonine 578, threonine 580, and threonine 582. Asparagine 639 is a glycosylation site (N-linked (GlcNAc...) asparagine). The chain crosses the membrane as a helical span at residues isoleucine 713 to phenylalanine 733. Residues valine 734–aspartate 885 lie on the Cytoplasmic side of the membrane. The segment at aspartate 750–phenylalanine 770 is disordered. Phosphotyrosine; by SRC occurs at positions 756, 757, and 758. Over residues tyrosine 758–phenylalanine 770 the composition is skewed to acidic residues. The required for binding CTNND1 and PSEN1 stretch occupies residues glutamate 761–leucine 772. Phosphoserine occurs at positions 773, 796, 841, 843, and 849. A disordered region spans residues proline 792 to glycine 811. Residues isoleucine 814–aspartate 885 form a required for binding alpha, beta and gamma catenins region.

As to quaternary structure, homodimer; disulfide-linked. Component of an E-cadherin/ catenin adhesion complex composed of at least E-cadherin/CDH1, beta-catenin/CTNNB1 or gamma-catenin/JUP, and potentially alpha-catenin/CTNNA1; the complex is located to adherens junctions. Found in a complex composed of CDH1, RAP1A and PKP3; PKP3 acts as a scaffold protein within the complex, the complex is required for CDH1 localization to mature desmosome cell junctions. Interacts with the TRPV4 and CTNNB1 complex. Interacts with CTNND1. The stable association of CTNNA1 is controversial as CTNNA1 was shown not to bind to F-actin when assembled in the complex. Alternatively, the CTNNA1-containing complex may be linked to F-actin by other proteins such as LIMA1. Interaction with PSEN1, cleaves CDH1 resulting in the disassociation of cadherin-based adherens junctions (CAJs). Interacts with AJAP1 and DLGAP5. Interacts with TBC1D2. Interacts with LIMA1. Interacts with CAV1. Interacts with PIP5K1C. Interacts with RAB8B. Interacts with DDR1; this stabilizes CDH1 at the cell surface and inhibits its internalization. Interacts with RAPGEF2. Interacts with KLRG1. Forms a ternary complex composed of ADAM10, CADH1 and EPHA4; within the complex, CADH1 is cleaved by ADAM10 which disrupts adherens junctions. Interacts with SPEF1. Interacts with CTNNB1 and PKP2. Interacts with AMOTL2; the interaction may facilitate binding of radial actin fibers to cell junction complexes. Interacts with DSG3; the interaction is required for CDH1 localization to developing adherens junctions. Post-translationally, during apoptosis or with calcium influx, cleaved by a membrane-bound metalloproteinase (ADAM10), PS1/gamma-secretase and caspase-3. Processing by the metalloproteinase, induced by calcium influx, causes disruption of cell-cell adhesion and the subsequent release of beta-catenin into the cytoplasm. The residual membrane-tethered cleavage product is rapidly degraded via an intracellular proteolytic pathway. Cleavage by caspase-3 releases the cytoplasmic tail resulting in disintegration of the actin microfilament system. The gamma-secretase-mediated cleavage promotes disassembly of adherens junctions. During development of the cochlear organ of Corti, cleavage by ADAM10 at adherens junctions promotes pillar cell separation. N-glycosylation at Asn-639 is essential for expression, folding and trafficking. Addition of bisecting N-acetylglucosamine by MGAT3 modulates its cell membrane location. In terms of processing, ubiquitinated by a SCF complex containing SKP2, which requires prior phosphorylation by CK1/CSNK1A1. Ubiquitinated by CBLL1/HAKAI, requires prior phosphorylation at Tyr-757. Post-translationally, O-glycosylated. O-manosylated by TMTC1, TMTC2, TMTC3 or TMTC4. Thr-287 and Thr-511 are O-mannosylated by TMTC2 or TMTC4 but not TMTC1 or TMTC3.

It is found in the cell junction. Its subcellular location is the adherens junction. The protein localises to the cell membrane. It localises to the endosome. The protein resides in the golgi apparatus. It is found in the trans-Golgi network. Its subcellular location is the cytoplasm. The protein localises to the desmosome. Cadherins are calcium-dependent cell adhesion proteins. They preferentially interact with themselves in a homophilic manner in connecting cells; cadherins may thus contribute to the sorting of heterogeneous cell types. CDH1 is involved in mechanisms regulating cell-cell adhesions, mobility and proliferation of epithelial cells. Promotes organization of radial actin fiber structure and cellular response to contractile forces, via its interaction with AMOTL2 which facilitates anchoring of radial actin fibers to CDH1 junction complexes at the cell membrane. Plays a role in the early stages of desmosome cell-cell junction formation via facilitating the recruitment of DSG2 and DSP to desmosome plaques. Has a potent invasive suppressor role. It is a ligand for integrin alpha-E/beta-7. Its function is as follows. E-Cad/CTF2 promotes non-amyloidogenic degradation of Abeta precursors. Has a strong inhibitory effect on APP C99 and C83 production. This is Cadherin-1 (CDH1) from Canis lupus familiaris (Dog).